Here is a 960-residue protein sequence, read N- to C-terminus: Chromo domain-containing protein 1 (960 aa).

The Chromo domain maps to Tyr22–Lys74.

In terms of assembly, ago1, chp1 and tas3 interact to form the core of the RNA-induced transcriptional silencing (RITS) complex. The RITS complex interacts with the RDRC complex via interaction between ago1 and hrr1. Clr4 has a role in mediating this interaction. Interacts with dri1.

Its subcellular location is the nucleus. The protein localises to the cytoplasm. The protein resides in the cytoskeleton. It is found in the microtubule organizing center. It localises to the spindle pole body. Functionally, component of the kinetochore which plays a role in stabilizing microtubules and so allowing accurate chromosome segregation. Has a role in the RNA interference (RNAi) pathway which is important for heterochromatin formation and accurate chromosome segregation. A member of the RNA-induced transcriptional silencing (RITS) complex which is involved in the biosynthesis of dsRNA from primer siRNAs provided by the RNA-directed RNA polymerase (RDRC) complex. The sequence is that of Chromo domain-containing protein 1 from Schizosaccharomyces pombe (strain 972 / ATCC 24843) (Fission yeast).